We begin with the raw amino-acid sequence, 391 residues long: UPF0229 protein CLL_A3091 (391 aa).

Disordered stretches follow at residues 1–23 (MAIF…DKRR) and 75–107 (VATG…GNEE). A compositionally biased stretch (basic and acidic residues) spans 80–92 (GEEKRGDKIESGS).

This sequence belongs to the UPF0229 family.

The chain is UPF0229 protein CLL_A3091 from Clostridium botulinum (strain Eklund 17B / Type B).